We begin with the raw amino-acid sequence, 224 residues long: Ethylene-inducing xylanase 5 (224 aa).

An N-terminal signal peptide occupies residues Met1–Ala16. The GH11 domain occupies Gln32–Ala218. Asn88 carries N-linked (GlcNAc...) asparagine glycosylation. The Nucleophile role is filled by Glu117. Glu205 acts as the Proton donor in catalysis.

Belongs to the glycosyl hydrolase 11 (cellulase G) family.

It carries out the reaction Endohydrolysis of (1-&gt;4)-beta-D-xylosidic linkages in xylans.. Its pathway is glycan degradation; xylan degradation. In terms of biological role, endo-1,4-beta-xylanase involved in the hydrolysis of xylan, a major structural heterogeneous polysaccharide found in plant biomass representing the second most abundant polysaccharide in the biosphere, after cellulose. May act as an elicitor of plant defense responses in certain plants but does not exhibit any cell death when transiently expressed in N.benthamiana. The sequence is that of Ethylene-inducing xylanase 5 from Verticillium dahliae (strain VdLs.17 / ATCC MYA-4575 / FGSC 10137) (Verticillium wilt).